A 43-amino-acid polypeptide reads, in one-letter code: uncharacterized protein (43 aa).

Residues 1–16 (MKLLNFILIIFNALKS) form the signal peptide. The N-linked (GlcNAc...) asparagine; by host glycan is linked to Asn-37.

This is an uncharacterized protein from Acheta domesticus (House cricket).